Consider the following 499-residue polypeptide: Pyruvate kinase 2 (499 aa).

Arginine 50 is a binding site for substrate. Residues asparagine 52, serine 54, aspartate 84, and threonine 85 each coordinate K(+). 52-55 (NFSH) provides a ligand contact to ATP. Residue arginine 91 participates in ATP binding. Glutamate 241 is a binding site for Mg(2+). Residues glycine 264, aspartate 265, and threonine 297 each coordinate substrate. Aspartate 265 lines the Mg(2+) pocket.

This sequence belongs to the pyruvate kinase family. As to quaternary structure, homotetramer. Mg(2+) serves as cofactor. K(+) is required as a cofactor.

It carries out the reaction pyruvate + ATP = phosphoenolpyruvate + ADP + H(+). It participates in carbohydrate degradation; glycolysis; pyruvate from D-glyceraldehyde 3-phosphate: step 5/5. Its activity is regulated as follows. Activated by fructose 2,6-bisphosphate, activated by the effector in a cooperative manner. In Trypanosoma brucei brucei, this protein is Pyruvate kinase 2 (PYK2).